A 253-amino-acid polypeptide reads, in one-letter code: Tryptophan synthase alpha chain (253 aa).

Catalysis depends on proton acceptor residues Glu45 and Asp56.

The protein belongs to the TrpA family. Tetramer of two alpha and two beta chains.

The enzyme catalyses (1S,2R)-1-C-(indol-3-yl)glycerol 3-phosphate + L-serine = D-glyceraldehyde 3-phosphate + L-tryptophan + H2O. It participates in amino-acid biosynthesis; L-tryptophan biosynthesis; L-tryptophan from chorismate: step 5/5. Functionally, the alpha subunit is responsible for the aldol cleavage of indoleglycerol phosphate to indole and glyceraldehyde 3-phosphate. The polypeptide is Tryptophan synthase alpha chain (Flavobacterium psychrophilum (strain ATCC 49511 / DSM 21280 / CIP 103535 / JIP02/86)).